A 224-amino-acid polypeptide reads, in one-letter code: Probable GTP-binding protein EngB (224 aa).

The region spanning 31–204 (VGVEIAFAGR…LGILDQWCKP (174 aa)) is the EngB-type G domain. GTP-binding positions include 39–46 (GRSNAGKS), 65–69 (GRTQL), 83–86 (DLPG), 150–153 (TKAD), and 183–185 (FSS). The Mg(2+) site is built by Ser-46 and Thr-67.

This sequence belongs to the TRAFAC class TrmE-Era-EngA-EngB-Septin-like GTPase superfamily. EngB GTPase family. Requires Mg(2+) as cofactor.

Its function is as follows. Necessary for normal cell division and for the maintenance of normal septation. In Shewanella piezotolerans (strain WP3 / JCM 13877), this protein is Probable GTP-binding protein EngB.